A 458-amino-acid chain; its full sequence is RuvB-like protein 1 (458 aa).

Residue 73–80 (GPPGTGKT) coordinates ATP.

Belongs to the RuvB family. Interacts with FRI, and with FLX and FES1, two component of the transcription activator complex FRI-C. Interacts with the disease resistance genes RPM1 and RPP5.

The protein resides in the nucleus. The catalysed reaction is ATP + H2O = ADP + phosphate + H(+). Proposed core component of the chromatin remodeling INO80 complex which is involved in transcriptional regulation, DNA replication and probably DNA repair. Component of the NuA4 histone acetyltransferase complex which is involved in transcriptional activation of select genes principally by acetylation of nucleosomal histones H4 and H2A. Has single-stranded DNA-stimulated ATPase and ATP-dependent DNA helicase (3' to 5') activity suggesting a role in nuclear processes such as recombination and transcription. The protein is RuvB-like protein 1 (RIN1) of Arabidopsis thaliana (Mouse-ear cress).